A 246-amino-acid polypeptide reads, in one-letter code: Uridylate kinase (246 aa).

ATP is bound at residue 20–23; sequence KISG. Residues 28-33 are involved in allosteric activation by GTP; the sequence is GDQGYG. Gly-62 serves as a coordination point for UMP. ATP-binding residues include Gly-63 and Arg-67. Residues Asp-82 and 143–150 each bind UMP; that span reads TGNPYFTT. Thr-170, Tyr-176, and Asp-179 together coordinate ATP.

It belongs to the UMP kinase family. Homohexamer.

The protein localises to the cytoplasm. It catalyses the reaction UMP + ATP = UDP + ADP. The protein operates within pyrimidine metabolism; CTP biosynthesis via de novo pathway; UDP from UMP (UMPK route): step 1/1. Its activity is regulated as follows. Allosterically activated by GTP. Inhibited by UTP. Its function is as follows. Catalyzes the reversible phosphorylation of UMP to UDP. In Cereibacter sphaeroides (strain ATCC 17025 / ATH 2.4.3) (Rhodobacter sphaeroides), this protein is Uridylate kinase.